The primary structure comprises 174 residues: Mytilin-3 (174 aa).

Positions 1–16 (MLKGIILIVTIQLVNA) are cleaved as a signal peptide.

In terms of tissue distribution, component of the organic matrix of calcified shell layers like nacre and prisms.

The protein resides in the secreted. This chain is Mytilin-3, found in Mytilus californianus (California mussel).